The chain runs to 161 residues: MRNASKKHLDLPYRPGVGMMILNADNHIFVGKRIDTKISAWQMPQGGIVPGETPSIAAMREMLEEIGSDKGYIIAESKCWYSYDLPSFLIPKLWNGNFRGQKQRWFLIRFTGNNEDININTSNPEFDQWRWASLNELLSIIIPFKRKLYQAVVKEFDSLIQ.

The Nudix hydrolase domain maps to 12-154 (PYRPGVGMMI…KRKLYQAVVK (143 aa)). The Nudix box signature appears at 46-67 (GGIVPGETPSIAAMREMLEEIG).

The protein belongs to the Nudix hydrolase family. RppH subfamily. It depends on a divalent metal cation as a cofactor.

In terms of biological role, accelerates the degradation of transcripts by removing pyrophosphate from the 5'-end of triphosphorylated RNA, leading to a more labile monophosphorylated state that can stimulate subsequent ribonuclease cleavage. This Rickettsia canadensis (strain McKiel) protein is RNA pyrophosphohydrolase.